The primary structure comprises 131 residues: Large-conductance mechanosensitive channel (131 aa).

3 consecutive transmembrane segments (helical) span residues phenylalanine 8–glycine 28, isoleucine 30–isoleucine 50, and glycine 67–valine 87.

It belongs to the MscL family. In terms of assembly, homopentamer.

The protein localises to the cell membrane. Its function is as follows. Channel that opens in response to stretch forces in the membrane lipid bilayer. May participate in the regulation of osmotic pressure changes within the cell. In Geobacillus kaustophilus (strain HTA426), this protein is Large-conductance mechanosensitive channel.